Consider the following 616-residue polypeptide: DNA mismatch repair protein MutL (616 aa).

It belongs to the DNA mismatch repair MutL/HexB family.

This protein is involved in the repair of mismatches in DNA. It is required for dam-dependent methyl-directed DNA mismatch repair. May act as a 'molecular matchmaker', a protein that promotes the formation of a stable complex between two or more DNA-binding proteins in an ATP-dependent manner without itself being part of a final effector complex. This is DNA mismatch repair protein MutL from Syntrophus aciditrophicus (strain SB).